Reading from the N-terminus, the 192-residue chain is Large ribosomal subunit protein bL9 (192 aa).

The tract at residues 172–192 (DALRPEDFFDPEADGIDEDEA) is disordered. Acidic residues predominate over residues 179–192 (FFDPEADGIDEDEA).

This sequence belongs to the bacterial ribosomal protein bL9 family.

Binds to the 23S rRNA. In Rhizobium etli (strain CIAT 652), this protein is Large ribosomal subunit protein bL9.